A 393-amino-acid polypeptide reads, in one-letter code: tRNA(Met) cytidine acetate ligase (393 aa).

Residues G81, N142, and R167 each contribute to the ATP site.

The protein belongs to the TmcAL family.

It is found in the cytoplasm. It catalyses the reaction cytidine(34) in elongator tRNA(Met) + acetate + ATP = N(4)-acetylcytidine(34) in elongator tRNA(Met) + AMP + diphosphate. In terms of biological role, catalyzes the formation of N(4)-acetylcytidine (ac(4)C) at the wobble position of elongator tRNA(Met), using acetate and ATP as substrates. First activates an acetate ion to form acetyladenylate (Ac-AMP) and then transfers the acetyl group to tRNA to form ac(4)C34. The protein is tRNA(Met) cytidine acetate ligase of Bacillus cereus (strain AH187).